A 349-amino-acid chain; its full sequence is Inositol 2-dehydrogenase (349 aa).

Belongs to the Gfo/Idh/MocA family. Homotetramer.

It carries out the reaction myo-inositol + NAD(+) = scyllo-inosose + NADH + H(+). Its function is as follows. Involved in the oxidation of myo-inositol (MI) to 2-keto-myo-inositol (2KMI or 2-inosose). In Mycolicibacterium gilvum (strain PYR-GCK) (Mycobacterium gilvum (strain PYR-GCK)), this protein is Inositol 2-dehydrogenase.